We begin with the raw amino-acid sequence, 216 residues long: Pyrrolidone-carboxylate peptidase (216 aa).

Residues E80, C143, and H167 contribute to the active site.

This sequence belongs to the peptidase C15 family. As to quaternary structure, homotetramer.

Its subcellular location is the cytoplasm. The enzyme catalyses Release of an N-terminal pyroglutamyl group from a polypeptide, the second amino acid generally not being Pro.. Its function is as follows. Removes 5-oxoproline from various penultimate amino acid residues except L-proline. The chain is Pyrrolidone-carboxylate peptidase (pcp) from Streptomyces coelicolor (strain ATCC BAA-471 / A3(2) / M145).